The chain runs to 188 residues: dCTP deaminase (188 aa).

DCTP contacts are provided by residues 111 to 116 (KSTYAR), 135 to 137 (TLE), glutamine 156, tyrosine 170, and glutamine 180. The active-site Proton donor/acceptor is glutamate 137.

The protein belongs to the dCTP deaminase family. As to quaternary structure, homotrimer.

It catalyses the reaction dCTP + H2O + H(+) = dUTP + NH4(+). The protein operates within pyrimidine metabolism; dUMP biosynthesis; dUMP from dCTP (dUTP route): step 1/2. In terms of biological role, catalyzes the deamination of dCTP to dUTP. The chain is dCTP deaminase from Thioalkalivibrio sulfidiphilus (strain HL-EbGR7).